We begin with the raw amino-acid sequence, 236 residues long: Lipoprotein signal peptidase (236 aa).

The next 4 helical transmembrane spans lie at 8-28, 44-64, 68-88, and 98-118; these read FYGI…WVYF, WFKL…FGFT, VLLT…IWNL, and LLWG…DSIF. Residues aspartate 141 and aspartate 174 contribute to the active site. The helical transmembrane segment at 166 to 186 threads the bilayer; it reads CLPVFNLADVAILAGVALIVL.

The protein belongs to the peptidase A8 family.

It localises to the cell inner membrane. The enzyme catalyses Release of signal peptides from bacterial membrane prolipoproteins. Hydrolyzes -Xaa-Yaa-Zaa-|-(S,diacylglyceryl)Cys-, in which Xaa is hydrophobic (preferably Leu), and Yaa (Ala or Ser) and Zaa (Gly or Ala) have small, neutral side chains.. It participates in protein modification; lipoprotein biosynthesis (signal peptide cleavage). Functionally, this protein specifically catalyzes the removal of signal peptides from prolipoproteins. The sequence is that of Lipoprotein signal peptidase from Amoebophilus asiaticus (strain 5a2).